A 457-amino-acid polypeptide reads, in one-letter code: Glycerol-3-phosphate acyltransferase 3 (457 aa).

The chain crosses the membrane as a helical span at residues 14-34 (WLTLVGSLILLPSAFGLSLGI). Phosphoserine is present on residues Ser68 and Ser77. 2 helical membrane passes run 137–157 (ISPKLTIVWVLGVLVRYCFLL) and 161–181 (VTLAFIGISLLIIGTTLVGQL). The short motif at 229–234 (HTSPID) is the HXXXXD motif element. The tract at residues 429 to 457 (GNGSPSLALDSSTVDNHGSPEPAFRSESL) is disordered. Polar residues predominate over residues 431-444 (GSPSLALDSSTVDN).

The protein belongs to the 1-acyl-sn-glycerol-3-phosphate acyltransferase family.

It is found in the endoplasmic reticulum membrane. It catalyses the reaction sn-glycerol 3-phosphate + an acyl-CoA = a 1-acyl-sn-glycero-3-phosphate + CoA. It carries out the reaction a 1-acyl-sn-glycero-3-phosphate + an acyl-CoA = a 1,2-diacyl-sn-glycero-3-phosphate + CoA. The catalysed reaction is dodecanoyl-CoA + sn-glycerol 3-phosphate = 1-dodecanoyl-sn-glycerol 3-phosphate + CoA. The enzyme catalyses sn-glycerol 3-phosphate + hexadecanoyl-CoA = 1-hexadecanoyl-sn-glycero-3-phosphate + CoA. It catalyses the reaction sn-glycerol 3-phosphate + (9Z)-octadecenoyl-CoA = 1-(9Z-octadecenoyl)-sn-glycero-3-phosphate + CoA. It carries out the reaction (9Z,12Z)-octadecadienoyl-CoA + sn-glycerol 3-phosphate = 1-(9Z,12Z)-octadecadienoyl-sn-glycero-3-phosphate + CoA. The catalysed reaction is 1-tetradecanoyl-sn-glycerol 3-phosphate + (9Z)-octadecenoyl-CoA = 1-tetradecanoyl-2-(9Z)-octadecenoyl-sn-glycero-3-phosphate + CoA. The enzyme catalyses 1-hexadecanoyl-sn-glycero-3-phosphate + (9Z)-octadecenoyl-CoA = 1-hexadecanoyl-2-(9Z-octadecenoyl)-sn-glycero-3-phosphate + CoA. It catalyses the reaction 1-(9Z-octadecenoyl)-sn-glycero-3-phosphate + (9Z)-octadecenoyl-CoA = 1,2-di-(9Z-octadecenoyl)-sn-glycero-3-phosphate + CoA. It carries out the reaction 1-(6Z,9Z,12Z-octadecatrienoyl)-sn-glycero-3-phosphate + (9Z)-octadecenoyl-CoA = (6Z,9Z,12Z)-octadecatrienoyl-2-(9Z)-octadecenoyl-sn-glycero-3-phosphate + CoA. The catalysed reaction is 1-(9Z,12Z,15Z)-octadecatrienoyl-sn-glycero-3-phosphate + (9Z)-octadecenoyl-CoA = 1-(9Z,12Z,15Z)-octadecatrienoyl-2-(9Z)-octadecenoyl-sn-glycero-3-phosphate + CoA. The enzyme catalyses 1-(9Z-octadecenoyl)-sn-glycero-3-phosphate + tetradecanoyl-CoA = 1-(9Z)-octadecenoyl-2-tetradecanoyl-sn-glycero-3-phosphate + CoA. It catalyses the reaction 1-(9Z-octadecenoyl)-sn-glycero-3-phosphate + hexadecanoyl-CoA = 1-(9Z)-octadecenoyl-2-hexadecanoyl-sn-glycero-3-phosphate + CoA. It carries out the reaction 1-(9Z-octadecenoyl)-sn-glycero-3-phosphate + octadecanoyl-CoA = 1-(9Z-octadecenoyl)-2-octadecanoyl-sn-glycero-3-phosphate + CoA. The catalysed reaction is 1-(9Z-octadecenoyl)-sn-glycero-3-phosphate + (9Z,12Z)-octadecadienoyl-CoA = 1-(9Z)-octadecenoyl-2-(9Z,12Z)-octadecadienoyl-sn-glycero-3-phosphate + CoA. The enzyme catalyses 1-(5Z,8Z,11Z,14Z-eicosatetraenoyl)-sn-glycero-3-phosphate + (9Z)-octadecenoyl-CoA = 1-(5Z,8Z,11Z,14Z)-eicosatetraenoyl-2-(9Z)-octadecenoyl-sn-glycero-3-phosphate + CoA. The protein operates within glycerolipid metabolism; triacylglycerol biosynthesis. Its pathway is phospholipid metabolism; CDP-diacylglycerol biosynthesis; CDP-diacylglycerol from sn-glycerol 3-phosphate: step 1/3. Its function is as follows. Converts glycerol-3-phosphate to 1-acyl-sn-glycerol-3-phosphate (lysophosphatidic acid or LPA) by incorporating an acyl moiety at the sn-1 position of the glycerol backbone. Also converts LPA into 1,2-diacyl-sn-glycerol-3-phosphate (phosphatidic acid or PA) by incorporating an acyl moiety at the sn-2 position of the glycerol backbone. Protects cells against lipotoxicity. The chain is Glycerol-3-phosphate acyltransferase 3 from Rattus norvegicus (Rat).